Reading from the N-terminus, the 582-residue chain is MAGLNQKSILDMIKEFRRNWHTLCNSERTTVCGADSMLLALQLSMAENNKQHSGEFTVSLSDIILTWKYFLHEKLNLPVENIKVIDHYEDIRKIYDDFLKNSNMLDLIDVYKKCSDLTSNCENYANISPSRLLDFLSGREYAVDDETDFSEPVSPMSKHNQENEKVQLLAKKIIYSYLNLLVNSKNDLALAHILNIPDRGLGREAFTDLKHAAREKQMSIFLVATSFIRTIELGGKGYAPSPSDPLRAHIKGLSNFINFIDKLDEILGEVSNPSIAGGRILSVIKMQLIKGQNSRDPFYKAVEEVAQDLDLRIKNIINSQQGDVALSTTDISPARPKSHTINHGTAYCGRDTVKALLVLLDEEAASAPTKNKAELLYDNENTIHPNGTSVLTLFRCRSPTQVDNSPMKPLRERIYKSMEEKKIKMKQTSIRSQFACTYKDDCMISKDKWNNVNSASEPLCVLHMENDLSEGVNSSVGRPTIGTSSGNVHLGRSEKEKVARKSSSLTGNTSSKRKQVDLDDENILCDNGNEPLQHKIVKIPKTSKDLQNKLDGKLLRVAKSNRCTTKDKLITGQTKLTQFFRL.

2 stretches are compositionally biased toward polar residues: residues 471 to 487 (GVNS…SSGN) and 501 to 510 (KSSSLTGNTS). The tract at residues 471 to 514 (GVNSSVGRPTIGTSSGNVHLGRSEKEKVARKSSSLTGNTSSKRK) is disordered.

This sequence belongs to the PARI family. Interacts with RAD51 and PCNA. Interacts with PARP1. Interacts with TASOR.

It localises to the cytoplasm. It is found in the nucleus. Required to suppress inappropriate homologous recombination, thereby playing a central role DNA repair and in the maintenance of genomic stability. Antagonizes homologous recombination by interfering with the formation of the RAD51-DNA homologous recombination structure. Binds single-strand DNA and poly(A) homopolymers. Positively regulate the poly(ADP-ribosyl)ation activity of PARP1; however such function may be indirect. The chain is PCNA-interacting partner (PARPBP) from Bos taurus (Bovine).